The chain runs to 212 residues: MTAWLGFLAVFLCSWSLRDLVAEACTCVPIHPQDAFCNSDIVIRAKVVGKKLMKDGPFGTMRYTVKQMKMYRGFQIMPHVQYIYTEASESLCGVKLEVNKYQYLITGRVYEGKVYTGLCNWYEKWDRLTLSQRKGLNHRYHLGCGCKIRPCYYLPCFATSKNECIWTDMLSNFGHSGHQAKHYACIQRVEGYCSWYRGWAPPDKTIINATDP.

The N-terminal stretch at 1–24 (MTAWLGFLAVFLCSWSLRDLVAEA) is a signal peptide. Cys-25 is a binding site for Zn(2+). Involved in metalloproteinase-binding regions lie at residues 25–28 (CTCV) and 89–90 (ES). 6 cysteine pairs are disulfide-bonded: Cys-25-Cys-92, Cys-27-Cys-119, Cys-37-Cys-144, Cys-146-Cys-193, Cys-151-Cys-156, and Cys-164-Cys-185. The 120-residue stretch at 25–144 (CTCVPIHPQD…GLNHRYHLGC (120 aa)) folds into the NTR domain.

Belongs to the protease inhibitor I35 (TIMP) family.

It is found in the secreted. Its subcellular location is the extracellular space. It localises to the extracellular matrix. Its function is as follows. Complexes with metalloproteinases (such as collagenases) and irreversibly inactivates them by binding to their catalytic zinc cofactor. May form part of a tissue-specific acute response to remodeling stimuli. The chain is Metalloproteinase inhibitor 3 (TIMP3) from Gallus gallus (Chicken).